Here is a 126-residue protein sequence, read N- to C-terminus: Histone H2B type F-S (126 aa).

A compositionally biased stretch (low complexity) spans 1–12 (MPEPAKSAPAPK). A disordered region spans residues 1–36 (MPEPAKSAPAPKKGSKKAVTKAQKKDGRKRKRSRKE). Pro-2 is subject to N-acetylproline. ADP-ribosyl glutamic acid is present on Glu-3. Residue Lys-6 is modified to N6-(2-hydroxyisobutyryl)lysine; alternate. The residue at position 6 (Lys-6) is an N6-(beta-hydroxybutyryl)lysine; alternate. Residue Lys-6 is modified to N6-acetyllysine; alternate. Lys-6 bears the N6-butyryllysine; alternate mark. Lys-6 is modified (N6-crotonyllysine; alternate). Lys-6 bears the N6-lactoyllysine; alternate mark. Lys-6 participates in a covalent cross-link: Glycyl lysine isopeptide (Lys-Gly) (interchain with G-Cter in SUMO2); alternate. Position 7 is an ADP-ribosylserine (Ser-7). Lys-12 bears the N6-(beta-hydroxybutyryl)lysine; alternate mark. N6-acetyllysine; alternate occurs at positions 12 and 13. An N6-crotonyllysine; alternate mark is found at Lys-12 and Lys-13. Lys-12 carries the post-translational modification N6-lactoyllysine; alternate. Lys-13 is subject to N6-(2-hydroxyisobutyryl)lysine; alternate. Ser-15 is modified (phosphoserine; by STK4/MST1). Lys-16, Lys-17, Lys-21, and Lys-24 each carry N6-acetyllysine; alternate. N6-crotonyllysine; alternate is present on residues Lys-16, Lys-17, Lys-21, and Lys-24. N6-lactoyllysine; alternate is present on residues Lys-16, Lys-17, Lys-21, and Lys-24. An N6-(beta-hydroxybutyryl)lysine; alternate mark is found at Lys-17 and Lys-21. Residue Lys-17 is modified to N6-glutaryllysine; alternate. 2 positions are modified to N6-(2-hydroxyisobutyryl)lysine; alternate: Lys-21 and Lys-24. Lys-21 bears the N6-butyryllysine; alternate mark. Lys-21 is covalently cross-linked (Glycyl lysine isopeptide (Lys-Gly) (interchain with G-Cter in SUMO2); alternate). The residue at position 25 (Lys-25) is an N6-(2-hydroxyisobutyryl)lysine. N6-(2-hydroxyisobutyryl)lysine; alternate is present on Lys-35. The residue at position 35 (Lys-35) is an N6-(beta-hydroxybutyryl)lysine; alternate. Lys-35 carries the N6-crotonyllysine; alternate modification. Residue Lys-35 is modified to N6-glutaryllysine; alternate. Lys-35 bears the N6-succinyllysine; alternate mark. Lys-35 is covalently cross-linked (Glycyl lysine isopeptide (Lys-Gly) (interchain with G-Cter in ubiquitin); alternate). The residue at position 36 (Glu-36) is a PolyADP-ribosyl glutamic acid. At Ser-37 the chain carries Phosphoserine; by AMPK. Lys-44, Lys-47, and Lys-58 each carry N6-(2-hydroxyisobutyryl)lysine; alternate. Lys-44 bears the N6-lactoyllysine; alternate mark. N6-glutaryllysine; alternate occurs at positions 44 and 47. Lys-47 is subject to N6-methyllysine; alternate. The residue at position 58 (Lys-58) is an N6,N6-dimethyllysine; alternate. Residue Arg-80 is modified to Dimethylated arginine. Lys-86 carries the N6-(2-hydroxyisobutyryl)lysine; alternate modification. Residue Lys-86 is modified to N6-(beta-hydroxybutyryl)lysine; alternate. Lys-86 carries the N6-acetyllysine; alternate modification. Lys-86 is subject to N6-lactoyllysine; alternate. N6,N6,N6-trimethyllysine; alternate is present on Lys-86. Residues Arg-87 and Arg-93 each carry the omega-N-methylarginine modification. Lys-109 is subject to N6-(2-hydroxyisobutyryl)lysine; alternate. Lys-109 carries the N6-lactoyllysine; alternate modification. At Lys-109 the chain carries N6-glutaryllysine; alternate. N6-methyllysine; alternate is present on Lys-109. A glycan (O-linked (GlcNAc) serine) is linked at Ser-113. Residue Thr-116 is modified to Phosphothreonine. An N6-(2-hydroxyisobutyryl)lysine; alternate mark is found at Lys-117 and Lys-121. Lys-117 and Lys-121 each carry N6-(beta-hydroxybutyryl)lysine; alternate. An N6-lactoyllysine; alternate mark is found at Lys-117 and Lys-121. N6-glutaryllysine; alternate occurs at positions 117 and 121. 2 positions are modified to N6-succinyllysine; alternate: Lys-117 and Lys-121. Position 117 is an N6-malonyllysine; alternate (Lys-117). Lys-117 carries the post-translational modification N6-methylated lysine; alternate. Lys-121 participates in a covalent cross-link: Glycyl lysine isopeptide (Lys-Gly) (interchain with G-Cter in ubiquitin); alternate.

Belongs to the histone H2B family. As to quaternary structure, the nucleosome is a histone octamer containing two molecules each of H2A, H2B, H3 and H4 assembled in one H3-H4 heterotetramer and two H2A-H2B heterodimers. The octamer wraps approximately 147 bp of DNA. In terms of processing, monoubiquitination at Lys-35 (H2BK34Ub) by the MSL1/MSL2 dimer is required for histone H3 'Lys-4' (H3K4me) and 'Lys-79' (H3K79me) methylation and transcription activation at specific gene loci, such as HOXA9 and MEIS1 loci. Similarly, monoubiquitination at Lys-121 (H2BK120Ub) by the RNF20/40 complex gives a specific tag for epigenetic transcriptional activation and is also prerequisite for histone H3 'Lys-4' and 'Lys-79' methylation. It also functions cooperatively with the FACT dimer to stimulate elongation by RNA polymerase II. H2BK120Ub also acts as a regulator of mRNA splicing: deubiquitination by USP49 is required for efficient cotranscriptional splicing of a large set of exons. Post-translationally, phosphorylation at Ser-37 (H2BS36ph) by AMPK in response to stress promotes transcription. Phosphorylated on Ser-15 (H2BS14ph) by STK4/MST1 during apoptosis; which facilitates apoptotic chromatin condensation. Also phosphorylated on Ser-15 in response to DNA double strand breaks (DSBs), and in correlation with somatic hypermutation and immunoglobulin class-switch recombination. GlcNAcylation at Ser-113 promotes monoubiquitination of Lys-121. It fluctuates in response to extracellular glucose, and associates with transcribed genes. In terms of processing, ADP-ribosylated by PARP1 or PARP2 on Ser-7 (H2BS6ADPr) in response to DNA damage. H2BS6ADPr promotes recruitment of CHD1L. Mono-ADP-ribosylated on Glu-3 (H2BE2ADPr) by PARP3 in response to single-strand breaks. Poly ADP-ribosylation on Glu-36 (H2BE35ADPr) by PARP1 regulates adipogenesis: it inhibits phosphorylation at Ser-37 (H2BS36ph), thereby blocking expression of pro-adipogenetic genes. Post-translationally, crotonylation (Kcr) is specifically present in male germ cells and marks testis-specific genes in post-meiotic cells, including X-linked genes that escape sex chromosome inactivation in haploid cells. Crotonylation marks active promoters and enhancers and confers resistance to transcriptional repressors. It is also associated with post-meiotically activated genes on autosomes. Lactylated in macrophages by EP300/P300 by using lactoyl-CoA directly derived from endogenous or exogenous lactate, leading to stimulates gene transcription.

The protein resides in the nucleus. It localises to the chromosome. Its function is as follows. Core component of nucleosome. Nucleosomes wrap and compact DNA into chromatin, limiting DNA accessibility to the cellular machineries which require DNA as a template. Histones thereby play a central role in transcription regulation, DNA repair, DNA replication and chromosomal stability. DNA accessibility is regulated via a complex set of post-translational modifications of histones, also called histone code, and nucleosome remodeling. Has broad antibacterial activity. May contribute to the formation of the functional antimicrobial barrier of the colonic epithelium, and to the bactericidal activity of amniotic fluid. The polypeptide is Histone H2B type F-S (Homo sapiens (Human)).